We begin with the raw amino-acid sequence, 418 residues long: Actin-related protein 3-A (418 aa).

It belongs to the actin family. ARP3 subfamily. Component of the Arp2/3 complex composed of actr2/arp2, actr3/arp3, arpc1 (arpc1a or arpc1b), arpc2, arpc3, arpc4 and arpc5.

Its subcellular location is the cytoplasm. It localises to the cytoskeleton. The protein localises to the cell projection. The protein resides in the nucleus. In terms of biological role, ATP-binding component of the Arp2/3 complex, a multiprotein complex that mediates actin polymerization upon stimulation by nucleation-promoting factor (NPF). The Arp2/3 complex mediates the formation of branched actin networks in the cytoplasm, providing the force for cell motility. Seems to contact the pointed end of the daughter actin filament. In addition to its role in the cytoplasmic cytoskeleton, the Arp2/3 complex also promotes actin polymerization in the nucleus, thereby regulating gene transcription and repair of damaged DNA. The Arp2/3 complex promotes homologous recombination (HR) repair in response to DNA damage by promoting nuclear actin polymerization, leading to drive motility of double-strand breaks (DSBs). This is Actin-related protein 3-A from Xenopus laevis (African clawed frog).